The sequence spans 301 residues: MSCNLLVILGPTASGKTQLGVELARRLSGEIISADSRQVYRGMDIGTGKDLAEYGDIPYHIIDIVDPGFEFNVFEFQRCFQRAFAHIVNRGRLPVMVGGTGMYLEAVLNRYRFVEVPENADLRRELSTFSDEELAERLKGANPRLHNTTDLLERGRLVRAIEIAEYEDSREPLPLPELAPLIFGIRWERPVLRQRITDRLKARLEQGMIDEIEQLHRSGIPYETLEFYGLEYRFVAKYLKGELNRNDMFQKLNSAIHDFAKRQDNWFRRMERHGTVIHWLEGDGDPLKEAQEILRLNAIPR.

10 to 17 (GPTASGKT) lines the ATP pocket. 12–17 (TASGKT) is a substrate binding site. Residues 35 to 38 (DSRQ) are interaction with substrate tRNA.

It belongs to the IPP transferase family. As to quaternary structure, monomer. It depends on Mg(2+) as a cofactor.

The enzyme catalyses adenosine(37) in tRNA + dimethylallyl diphosphate = N(6)-dimethylallyladenosine(37) in tRNA + diphosphate. Functionally, catalyzes the transfer of a dimethylallyl group onto the adenine at position 37 in tRNAs that read codons beginning with uridine, leading to the formation of N6-(dimethylallyl)adenosine (i(6)A). The polypeptide is tRNA dimethylallyltransferase 1 (Geotalea uraniireducens (strain Rf4) (Geobacter uraniireducens)).